Reading from the N-terminus, the 256-residue chain is MPFSPQELLYEGKAKRIYRTADPRVYLCQYKDDATAFNAQKRGSIAGKGEVNCTVSSHVFAYLAQQGIPNHFLAQTGPTEMQVRALHILPLEVVVRNRTAGSLCQRLGLEQGLPIEPPLVEFYYKNDALGDPLVTPDHIRLLHLATPEQVEKLGSLALAVNTHLGNFWRRCRLELVDFKLEFGLDEEGQIWLADEISPDTCRLWDLQGTEPRVLDKDLFRFDLGDPAAGYQEVLQRVLQATDPNLPSPAARERGRG.

It belongs to the SAICAR synthetase family.

The enzyme catalyses 5-amino-1-(5-phospho-D-ribosyl)imidazole-4-carboxylate + L-aspartate + ATP = (2S)-2-[5-amino-1-(5-phospho-beta-D-ribosyl)imidazole-4-carboxamido]succinate + ADP + phosphate + 2 H(+). It functions in the pathway purine metabolism; IMP biosynthesis via de novo pathway; 5-amino-1-(5-phospho-D-ribosyl)imidazole-4-carboxamide from 5-amino-1-(5-phospho-D-ribosyl)imidazole-4-carboxylate: step 1/2. The chain is Phosphoribosylaminoimidazole-succinocarboxamide synthase from Synechococcus sp. (strain JA-3-3Ab) (Cyanobacteria bacterium Yellowstone A-Prime).